Consider the following 278-residue polypeptide: Methyltransferase GfsG (278 aa).

S-adenosyl-L-methionine contacts are provided by residues glutamine 105 and 128-129 (DA). Glutamate 146 serves as the catalytic Proton acceptor. Residue histidine 150 participates in S-adenosyl-L-methionine binding.

Belongs to the methyltransferase superfamily.

It participates in antibiotic biosynthesis. Methylase required for synthesis of the 16-membered macrolide antibiotics FD-891 and FD-892. In vitro uses S-adenosyl-L-methionine to methylate a number of biosynthetic intermediates in the synthesis of FD-891. The chain is Methyltransferase GfsG from Streptomyces halstedii.